The chain runs to 206 residues: Ras-related protein Rab-18 (206 aa).

Methionine 1 bears the N-acetylmethionine mark. Residues serine 17, glycine 20, lysine 21, serine 22, serine 23, aspartate 34, proline 35, threonine 40, glycine 66, lysine 123, and aspartate 125 each contribute to the GTP site. Serine 22 lines the Mg(2+) pocket. Short sequence motifs (switch) lie at residues 31–45 (DTFD…GVDF) and 63–80 (DTAG…YYRG). Threonine 40 serves as a coordination point for Mg(2+). Position 144 is a phosphoserine (serine 144). Alanine 152 lines the GTP pocket. Cysteine 199 carries S-palmitoyl cysteine lipidation. Position 203 is a cysteine methyl ester (cysteine 203). Residue cysteine 203 is the site of S-geranylgeranyl cysteine attachment. A propeptide spans 204-206 (SVL) (removed in mature form).

This sequence belongs to the small GTPase superfamily. Rab family. In terms of assembly, interacts (in GTP-bound form) with ZFYVE1. Interacts with ZW10 and this interaction is enhanced in the presence of ZFYVE1. Interacts with BSCL2. (Microbial infection) Interacts with Hepatitis C virus (HCV) non-structural protein 5A; this interaction may promote the association of NS5A and other viral replicase components with lipid droplets. The cofactor is Mg(2+). Ubiquitous.

Its subcellular location is the endoplasmic reticulum membrane. It localises to the golgi apparatus. The protein resides in the cis-Golgi network membrane. The protein localises to the lipid droplet. It is found in the apical cell membrane. It carries out the reaction GTP + H2O = GDP + phosphate + H(+). Regulated by guanine nucleotide exchange factor (GEF) RAB3GAP1-RAB3GAP2 complex at the cis-Golgi membrane which promotes the exchange of bound GDP for free GTP. Regulated by GTPase activating protein (GAP) TBC1D20 at the ER membrane which increases the GTP hydrolysis activity. Inhibited by GDP dissociation inhibitors (GDIs) which prevent Rab-GDP dissociation. Functionally, the small GTPases Rab are key regulators of intracellular membrane trafficking, from the formation of transport vesicles to their fusion with membranes. Rabs cycle between an inactive GDP-bound form and an active GTP-bound form that is able to recruit to membranes different sets of downstream effectors directly responsible for vesicle formation, movement, tethering and fusion. RAB18 is required for the localization of ZFYVE1 to lipid droplets and for its function in mediating the formation of endoplasmic reticulum-lipid droplets (ER-LD) contacts. Also required for maintaining endoplasmic reticulum structure. Plays a role in apical endocytosis/recycling. Plays a key role in eye and brain development and neurodegeneration. This chain is Ras-related protein Rab-18, found in Homo sapiens (Human).